A 246-amino-acid polypeptide reads, in one-letter code: Peroxisomal membrane protein 11A (246 aa).

The Cytoplasmic portion of the chain corresponds to 1 to 93 (MDAFIRVANQ…LCLTLANLNR (93 aa)). The chain crosses the membrane as a helical span at residues 94-114 (VVYYICDTVLWAKSVGLTSGI). Topologically, residues 115–217 (NREKWQMRAA…LNQLGIYKSN (103 aa)) are lumenal. A helical transmembrane segment spans residues 218–238 (LGVVGFGGLVSSVAGLITVVY). The required for homodimerization, interaction with PEX11G, and peroxisomal localization stretch occupies residues 218–238 (LGVVGFGGLVSSVAGLITVVY). Residues 239–246 (PQLKLKAR) lie on the Cytoplasmic side of the membrane.

It belongs to the peroxin-11 family. Homodimer. Heterodimer with PEX11G. Probably interacts with COPB2 and COPA. Interacts with PEX19. Interacts with FIS1. Expressed at high levels in kidney, liver, lung, brain, and testis and at low levels in heart, spleen and skeletal muscle.

It is found in the peroxisome membrane. In terms of biological role, may be involved in peroxisomal proliferation and may regulate peroxisomes division. May mediate binding of coatomer proteins to the peroxisomal membrane. Promotes membrane protrusion and elongation on the peroxisomal surface. This chain is Peroxisomal membrane protein 11A (Pex11a), found in Rattus norvegicus (Rat).